Consider the following 658-residue polypeptide: Probable CoA ligase CCL6 (658 aa).

ATP-binding positions include 226–234 (TSGATGEPK), 411–416 (QGYGLT), Asp-497, 509–512 (IIDR), and Lys-632. The interval 298–411 (DIRFLMDDLQ…RVTSCAALSQ (114 aa)) is SBD1. Residues 412-477 (GYGLTESCGG…LRGTTLFSGY (66 aa)) are SBD2.

This sequence belongs to the ATP-dependent AMP-binding enzyme family. As to expression, mostly expressed in glandular trichomes (lupulin glands) after flowering, and, to a lower extent, in stems, leaves, cones and flowers.

The protein localises to the cytoplasm. Its subcellular location is the cytosol. This Humulus lupulus (European hop) protein is Probable CoA ligase CCL6.